The sequence spans 317 residues: NAC domain-containing protein 55 (317 aa).

Positions 14–162 (LPPGFRFYPT…DWVLCRIYKK (149 aa)) constitute an NAC domain. The DNA-binding element occupies 111 to 168 (VGIKKALVFYIGKAPKGTKTNWIMHEYRLIEPSRRNGSTKLDDWVLCRIYKKQTSAQK).

As to expression, expressed in leaves.

The protein resides in the nucleus. Transcription factors that bind specifically to the 5'-CATGTG-3' motif. The protein is NAC domain-containing protein 55 (NAC055) of Arabidopsis thaliana (Mouse-ear cress).